An 89-amino-acid chain; its full sequence is YcgL domain-containing protein Asuc_1390 (89 aa).

Positions 1-85 (MLCAIYKSKK…KDDWLFTIEK (85 aa)) constitute a YcgL domain.

The sequence is that of YcgL domain-containing protein Asuc_1390 from Actinobacillus succinogenes (strain ATCC 55618 / DSM 22257 / CCUG 43843 / 130Z).